The following is a 293-amino-acid chain: MAPANLPSIFNATSTDIEQLLAAQCHVGSKNLGVNMQPYLWKTRADGVNVINIGKTWEKITLAARIIAAIDNPSDVCVISARPYGQRAVLKFAAHTGAQAIAGRFTPGSFTNYITRSFKEPRLIIVTDPRTDSQAIKEASYVNIPVIALCDTDSPTEYVDVAIPTNNKGRHSIGLVWWMLAREVLRLRGTIYNRETPWDVMPDLYFYRDPEAEAEEKVEEEKVPGVEEEGPVAIESGFPAGGADWEAAPAGFPAAATGEWSEAQPATWESGAAAATGPSTEWADSAPKDTAGW.

The tract at residues 239–293 (PAGGADWEAAPAGFPAAATGEWSEAQPATWESGAAAATGPSTEWADSAPKDTAGW) is disordered. Residues 247 to 256 (AAPAGFPAAA) show a composition bias toward low complexity.

It belongs to the universal ribosomal protein uS2 family. In terms of assembly, component of the small ribosomal subunit. Mature ribosomes consist of a small (40S) and a large (60S) subunit. The 40S subunit contains about 33 different proteins and 1 molecule of RNA (18S). The 60S subunit contains about 49 different proteins and 3 molecules of RNA (25S, 5.8S and 5S). Interacts with RPS21.

It localises to the cytoplasm. In terms of biological role, required for the assembly and/or stability of the 40S ribosomal subunit. Required for the processing of the 20S rRNA-precursor to mature 18S rRNA in a late step of the maturation of 40S ribosomal subunits. The protein is Small ribosomal subunit protein uS2 of Chaetomium globosum (strain ATCC 6205 / CBS 148.51 / DSM 1962 / NBRC 6347 / NRRL 1970) (Soil fungus).